Reading from the N-terminus, the 873-residue chain is Kinase suppressor of Ras 1 (873 aa).

3 disordered regions span residues M1–A24, E174–S230, and L251–K281. The mediates association with membranes stretch occupies residues M1–G170. Over residues A206–V216 the composition is skewed to polar residues. T256 and T260 each carry phosphothreonine. S297 carries the post-translational modification Phosphoserine; by MARK3. S320 bears the Phosphoserine mark. A Phorbol-ester/DAG-type zinc finger spans residues T333–C377. Residue H334 participates in Zn(2+) binding. S337 bears the Phosphoserine mark. Zn(2+) contacts are provided by C346, C349, C359, C362, H367, C370, and C377. At S392 the chain carries Phosphoserine; by MARK3. A Phosphothreonine modification is found at T411. Disordered regions lie at residues L416–F473 and H506–R544. Low complexity predominate over residues S429–T458. Residues H506 to E519 are compositionally biased toward basic and acidic residues. At S518 the chain carries Phosphoserine. A compositionally biased stretch (acidic residues) spans A520–D530. A Protein kinase domain is found at V563–L833. Residue I569–V577 coordinates ATP. Residue D683 is the Proton acceptor of the active site. K685 and D700 together coordinate ATP. Position 838 is a phosphoserine (S838).

Belongs to the protein kinase superfamily. TKL Ser/Thr protein kinase family. In terms of assembly, homodimer. Heterodimerizes (via N-terminus) with BRAF (via N-terminus) in a MAP2K1/MEK1 or MAP2K2/MEK2-dependent manner. Interacts with MAP2K1/MEK1 and MAP2K2/MEK2. Binding to MAP2K1/MEK1 releases the intramolecular inhibitory interaction between KSR1 N-terminus and kinase domains which is required for the subsequent RSK1 dimerization with BRAF. Identified in a complex with AKAP13, MAP2K1 and BRAF. Interacts with AKAP13 and BRAF. Interacts with RAF and MAPK/ERK, in a Ras-dependent manner. Interacts with 14-3-3 proteins including YWHAB. Interacts with HSP90AA1/HSP90, YWHAE/14-3-3 and CDC37. The binding of 14-3-3 proteins to phosphorylated KSR1 prevents the membrane localization. Interacts with MARK3/C-TAK1. Interacts with PPP2R1A and PPP2CA. Interacts with VRK2. Post-translationally, phosphorylated on Ser-297 and, to a higher extent, on Ser-392 by MARK3. Dephosphorylated on Ser-392 by PPP2CA. Phosphorylated KSR1 is cytoplasmic and dephosphorylated KSR1 is membrane-associated. Phosphorylated by PKA at Ser-838. Phosphorylation at Ser-838 is required for cAMP-dependent activation of MAPK1 and/or MAPK3. As to expression, expressed in brain, spleen and testis. Isoform 1 is highly expressed spleen and weakly in testis, and isoform 2 is highly expressed in brain and weakly in testis.

It is found in the cytoplasm. Its subcellular location is the membrane. The protein resides in the cell membrane. It localises to the cell projection. The protein localises to the ruffle membrane. It is found in the endoplasmic reticulum membrane. The enzyme catalyses L-seryl-[protein] + ATP = O-phospho-L-seryl-[protein] + ADP + H(+). It carries out the reaction L-threonyl-[protein] + ATP = O-phospho-L-threonyl-[protein] + ADP + H(+). Its function is as follows. Part of a multiprotein signaling complex which promotes phosphorylation of Raf family members and activation of downstream MAP kinases. Independently of its kinase activity, acts as MAP2K1/MEK1 and MAP2K2/MEK2-dependent allosteric activator of BRAF; upon binding to MAP2K1/MEK1 or MAP2K2/MEK2, dimerizes with BRAF and promotes BRAF-mediated phosphorylation of MAP2K1/MEK1 and/or MAP2K2/MEK2. Promotes activation of MAPK1 and/or MAPK3, both in response to EGF and to cAMP. Its kinase activity is unsure. Some protein kinase activity has been detected in vitro, however the physiological relevance of this activity is unknown. This is Kinase suppressor of Ras 1 (Ksr1) from Mus musculus (Mouse).